A 179-amino-acid chain; its full sequence is Peptide deformylase 2 (179 aa).

The Fe cation site is built by Cys104 and His146. Residue Glu147 is part of the active site. Fe cation is bound at residue His150.

The protein belongs to the polypeptide deformylase family. The cofactor is Fe(2+).

The catalysed reaction is N-terminal N-formyl-L-methionyl-[peptide] + H2O = N-terminal L-methionyl-[peptide] + formate. Functionally, removes the formyl group from the N-terminal Met of newly synthesized proteins. Requires at least a dipeptide for an efficient rate of reaction. N-terminal L-methionine is a prerequisite for activity but the enzyme has broad specificity at other positions. The chain is Peptide deformylase 2 from Streptomyces coelicolor (strain ATCC BAA-471 / A3(2) / M145).